Here is a 68-residue protein sequence, read N- to C-terminus: Large ribosomal subunit protein uL29c (68 aa).

The protein belongs to the universal ribosomal protein uL29 family.

It localises to the plastid. It is found in the chloroplast. The protein is Large ribosomal subunit protein uL29c of Pyropia yezoensis (Susabi-nori).